A 388-amino-acid chain; its full sequence is Zinc finger protein ubi-d4 A (388 aa).

The disordered stretch occupies residues G60 to R190. Composition is skewed to basic and acidic residues over residues P97–G107 and D123–D137. Residues P156 to E170 are compositionally biased toward acidic residues. The C2H2-type zinc finger occupies Y205 to H228. The disordered stretch occupies residues E233 to G264. Basic and acidic residues predominate over residues H251–P262. 2 PHD-type zinc fingers span residues N269–C329 and C326–L376.

It belongs to the requiem/DPF family.

The protein localises to the cytoplasm. It localises to the nucleus. Functionally, may be a transcription factor required for the apoptosis response following survival factor withdrawal from myeloid cells. Might also have a role in the development and maturation of lymphoid cells. The polypeptide is Zinc finger protein ubi-d4 A (req-a) (Xenopus laevis (African clawed frog)).